The chain runs to 436 residues: MSLPTVAIVGRPNVGKSTIFNRIAGERISIVEDIPGVTRDRIYATGEWLTRKFNIIDTGGIELSDEPFMTEIRAQAEIAMTEADVIIAVVDGETGITDADEAVANILYRTDKPVILIVNKVDNPERRMEIFDFYSLGLGDPYPVSAVHGIGTGDVLDAIVQNLPNEIEEENEDVIKFSLIGRPNVGKSSLINAILGEDRVIASPIAGTTRDAIDTHFVDSEDQEFVMIDTAGMRKSGKIYENTEKYSVMRAMRAIDRSDIVLMVINAEEGIREYDMRIAGFAHEAGKGILIVVNKWDTLEKDNDTMKKFELEIRTKFKFLDYAPIVYVSAKTGQRLNKLPDMIKEIHHAQNLRISSSVLNDVIMDAVAINPTPTDKGKRLKIFYATQVAIKPPTFVVFVNEEELMHFSYLRFLENQIRKAFVFEGTPIHLIARKRK.

EngA-type G domains follow at residues 4–167 and 175–351; these read PTVA…PNEI and IKFS…HAQN. GTP contacts are provided by residues 10 to 17, 57 to 61, 119 to 122, 181 to 188, 229 to 233, and 294 to 297; these read GRPNVGKS, DTGGI, NKVD, DTAGM, and NKWD. A KH-like domain is found at 352–436; it reads LRISSSVLND…PIHLIARKRK (85 aa).

It belongs to the TRAFAC class TrmE-Era-EngA-EngB-Septin-like GTPase superfamily. EngA (Der) GTPase family. Associates with the 50S ribosomal subunit.

Its function is as follows. GTPase that plays an essential role in the late steps of ribosome biogenesis. The protein is GTPase Der of Lactococcus lactis subsp. cremoris (strain SK11).